A 505-amino-acid polypeptide reads, in one-letter code: MSDKDDIETPLLTEAAPILEDGNCEPAKNSESVDQGAKPESKSEPVVSTRKRPETKPSSDLETSKVLPIQDNVSKDVPQTRWGYWGSWGKSILSSASATVATVGQGISNVIEKAETSLGIPGPSEISTEVKYVAGETNAKENENSSPVAGAFGVFSTISTAVQSTGKSVISGGLDALEFIGKKTMDVIAEGDPGFKRTKGLMNRNATLSQVLREAKEKEEIRTSNEVTVETDKKTHYGLLFDEFQGLSHLEALEMLSQESEIKVKSILNSLSGEELETLKVELEQLKETFSLAEFCEEEEEEKKGDEDFTKDITELFSQLHVSSKPEKLARARNTAHEWIRKSLTKPLAENEEGEKQSEAENTEQVNKNSIEDIHAFAIRSLAELTACSIELFHKTAALVLHGRKQEVTAIERSQTLSQMTIVLCKELSSLSKEFTTCLTTAGVKEMADVLNPLITAVFLEASNSASYIQDAFQLLLPVLEISLIENKIESHRHELQGQKPLLEH.

A disordered region spans residues 1-65 (MSDKDDIETP…KPSSDLETSK (65 aa)). The segment covering 51-63 (KRPETKPSSDLET) has biased composition (basic and acidic residues). A phosphoserine mark is found at Ser87, Ser146, and Ser209. A coiled-coil region spans residues 268 to 295 (LNSLSGEELETLKVELEQLKETFSLAEF). The tract at residues 342 to 366 (KSLTKPLAENEEGEKQSEAENTEQV) is disordered.

Belongs to the FAM114 family.

The chain is Protein FAM114A2 (FAM114A2) from Homo sapiens (Human).